The primary structure comprises 516 residues: MIDLEALPHLPGCYLFKDEEGVVLYVGKAKDLKKRVSSYFQKRDHDPKTTSLVQAARGLDFIVTNTEVEALLLENTLIKKHWPRYNILLKDSKRYACIHLTGEKFPRIRIARKNTGDGEFFGPFVSAKERDYIFEVVRKTFQLRTCKKMPSRACLRYHIGACSGPCIGSISEEEYGEKVKRATSVLKGNIGELIESMEKEMKKMAAKQMFEQAMALRDEISALEYLQEKQNMERQKKHDEDILNYIVRDNTVYLMLFKVYKGTLEDKQDYVFAFGEDFLQEFLVQYYSENDPPEELIVPQVLEESLVEFLAHVKGKKVKVTVPKQGEKKELLDLALKNVEIGFFGDRKKLESLQSKLSLPKLPNVIECFDISHLSGTSTVGSMVQFRGGRPDKHNYRRFKIESVEGIDDFASIAEVVRRRYSRLLEDKHEMPDLIIIDGGKGQLSSAFQELRKLKIRVPIISIAKREEELYVPGLKSPLPIKRNEKASLFVQEIRDEAHRFAITYNRLLRQKSLIK.

Residues 9–87 (HLPGCYLFKD…IKKHWPRYNI (79 aa)) enclose the GIY-YIG domain. A UVR domain is found at 191 to 226 (GELIESMEKEMKKMAAKQMFEQAMALRDEISALEYL).

It belongs to the UvrC family. In terms of assembly, interacts with UvrB in an incision complex.

The protein resides in the cytoplasm. Functionally, the UvrABC repair system catalyzes the recognition and processing of DNA lesions. UvrC both incises the 5' and 3' sides of the lesion. The N-terminal half is responsible for the 3' incision and the C-terminal half is responsible for the 5' incision. The chain is UvrABC system protein C from Methanosarcina acetivorans (strain ATCC 35395 / DSM 2834 / JCM 12185 / C2A).